We begin with the raw amino-acid sequence, 160 residues long: Cyanate hydratase (160 aa).

Catalysis depends on residues Arg100, Glu103, and Ser126.

Belongs to the cyanase family.

The catalysed reaction is cyanate + hydrogencarbonate + 3 H(+) = NH4(+) + 2 CO2. In terms of biological role, catalyzes the reaction of cyanate with bicarbonate to produce ammonia and carbon dioxide. This chain is Cyanate hydratase, found in Arthroderma otae (strain ATCC MYA-4605 / CBS 113480) (Microsporum canis).